The primary structure comprises 305 residues: Oxygen-dependent coproporphyrinogen-III oxidase (305 aa).

Ser-93 contacts substrate. Positions 97 and 107 each coordinate a divalent metal cation. His-107 acts as the Proton donor in catalysis. 109–111 contributes to the substrate binding site; the sequence is NVR. Residues His-146 and His-176 each coordinate a divalent metal cation. An important for dimerization region spans residues 241–276; the sequence is YVEFNLVYDRGTLFGLQSGGRTESILMSLPPQVRWG. Position 259–261 (259–261) interacts with substrate; the sequence is GGR.

Belongs to the aerobic coproporphyrinogen-III oxidase family. Homodimer. Requires a divalent metal cation as cofactor.

The protein localises to the cytoplasm. It catalyses the reaction coproporphyrinogen III + O2 + 2 H(+) = protoporphyrinogen IX + 2 CO2 + 2 H2O. It participates in porphyrin-containing compound metabolism; protoporphyrin-IX biosynthesis; protoporphyrinogen-IX from coproporphyrinogen-III (O2 route): step 1/1. Functionally, involved in the heme biosynthesis. Catalyzes the aerobic oxidative decarboxylation of propionate groups of rings A and B of coproporphyrinogen-III to yield the vinyl groups in protoporphyrinogen-IX. This is Oxygen-dependent coproporphyrinogen-III oxidase from Pseudomonas fluorescens (strain ATCC BAA-477 / NRRL B-23932 / Pf-5).